The following is a 332-amino-acid chain: Glycerol-3-phosphate dehydrogenase [NAD(P)+] (332 aa).

Ser15, Trp16, and Lys110 together coordinate NADPH. The sn-glycerol 3-phosphate site is built by Lys110, Gly137, and Ser139. Ala141 contributes to the NADPH binding site. Sn-glycerol 3-phosphate contacts are provided by Lys192, Asp245, Ser255, Arg256, and Asn257. Lys192 serves as the catalytic Proton acceptor. Arg256 contributes to the NADPH binding site. Glu282 serves as a coordination point for NADPH.

It belongs to the NAD-dependent glycerol-3-phosphate dehydrogenase family.

It localises to the cytoplasm. The enzyme catalyses sn-glycerol 3-phosphate + NAD(+) = dihydroxyacetone phosphate + NADH + H(+). It catalyses the reaction sn-glycerol 3-phosphate + NADP(+) = dihydroxyacetone phosphate + NADPH + H(+). The protein operates within membrane lipid metabolism; glycerophospholipid metabolism. In terms of biological role, catalyzes the reduction of the glycolytic intermediate dihydroxyacetone phosphate (DHAP) to sn-glycerol 3-phosphate (G3P), the key precursor for phospholipid synthesis. The sequence is that of Glycerol-3-phosphate dehydrogenase [NAD(P)+] from Coxiella burnetii (strain CbuK_Q154) (Coxiella burnetii (strain Q154)).